Consider the following 88-residue polypeptide: Putative sulfur carrier protein AF_0552 (88 aa).

This sequence belongs to the sulfur carrier protein CysO family.

This Archaeoglobus fulgidus (strain ATCC 49558 / DSM 4304 / JCM 9628 / NBRC 100126 / VC-16) protein is Putative sulfur carrier protein AF_0552.